We begin with the raw amino-acid sequence, 207 residues long: Large ribosomal subunit protein uL4 (207 aa).

The segment at 57–78 (VAGGGKKPWRQKGTGRARHGSI) is disordered. Residues 63-77 (KPWRQKGTGRARHGS) show a composition bias toward basic residues.

It belongs to the universal ribosomal protein uL4 family. Part of the 50S ribosomal subunit.

One of the primary rRNA binding proteins, this protein initially binds near the 5'-end of the 23S rRNA. It is important during the early stages of 50S assembly. It makes multiple contacts with different domains of the 23S rRNA in the assembled 50S subunit and ribosome. Functionally, forms part of the polypeptide exit tunnel. This Onion yellows phytoplasma (strain OY-M) protein is Large ribosomal subunit protein uL4.